The following is a 196-amino-acid chain: MGVLENIVPGELYDANYDPDLLKIRKETKIKLHEYNTLSPADENKKSQVIRELLGSCTDNFIIEPPFYCDYGSNIYIGDNFYANHNLVILDGAKVVIGDNVFIAPNVGIYTAGHPIDVERRLQGLEYAMPVTIGDNVWIGGGVSIIPGVNIGKNSVIAAGSVVIRDIPENVVAAGNPCKVIRKITEKDSTTTNYRK.

Asn-84 contributes to the acetyl-CoA binding site. Residue His-114 is the Proton donor/acceptor of the active site. Acetyl-CoA-binding positions include Gly-141, Ala-159, 164 to 165 (IR), Lys-179, and Arg-182.

Belongs to the transferase hexapeptide repeat family. As to quaternary structure, homodimer.

The protein is Putative acetyltransferase YJL218W of Saccharomyces cerevisiae (strain ATCC 204508 / S288c) (Baker's yeast).